A 37-amino-acid chain; its full sequence is Large ribosomal subunit protein bL36 (37 aa).

This sequence belongs to the bacterial ribosomal protein bL36 family.

The polypeptide is Large ribosomal subunit protein bL36 (Parasynechococcus marenigrum (strain WH8102)).